Reading from the N-terminus, the 230-residue chain is Flagellar L-ring protein (230 aa).

Residues 1 to 15 (MSRPPLLSSACLAAT) form the signal peptide. The N-palmitoyl cysteine moiety is linked to residue C16. C16 carries S-diacylglycerol cysteine lipidation.

This sequence belongs to the FlgH family. The basal body constitutes a major portion of the flagellar organelle and consists of four rings (L,P,S, and M) mounted on a central rod.

It is found in the cell outer membrane. The protein localises to the bacterial flagellum basal body. In terms of biological role, assembles around the rod to form the L-ring and probably protects the motor/basal body from shearing forces during rotation. This is Flagellar L-ring protein from Xanthomonas oryzae pv. oryzae (strain MAFF 311018).